Here is a 15281-residue protein sequence, read N- to C-terminus: Cyclosporin synthetase simA (15281 aa).

The segment at 34–463 is condensation 1; the sequence is SFAQGRLWFL…AVHVKTMPLT (430 aa). Positions 513 to 918 are adenylation 1; that stretch reads SYSELDHKSD…NSDQVRDAAV (406 aa). A Carrier 1 domain is found at 1026-1100; it reads APRNEIEAVL…DLAATIQRGS (75 aa). Ser-1060 is modified (O-(pantetheine 4'-phosphoryl)serine). The tract at residues 1118–1549 is condensation 2; the sequence is SFAQGRLWFL…QTPIMTMPLT (432 aa). The segment at 1599–2004 is adenylation 2; it reads SYAELDQRSD…SSAGVHDAVV (406 aa). Positions 2067 to 2251 are methyltransferase (M) domain 1; sequence SWTSMYDGTL…LEELEEELLV (185 aa). The Carrier 2 domain maps to 2524–2598; sequence APRDSIEAII…DLAATIQQDT (75 aa). Ser-2558 bears the O-(pantetheine 4'-phosphoryl)serine mark. Positions 2616–3044 are condensation 3; sequence SFAQGRLWFL…EPDMPVASMA (429 aa). The segment at 3096–3498 is adenylation 3; sequence SYADLDRKSD…SHDLVTDAAV (403 aa). Positions 3562-3749 are methyltransferase (M) domain 2; sequence SMYDGSLIKK…EDELLVDPAF (188 aa). The Carrier 3 domain occupies 4011–4085; the sequence is APRTEIERVL…DLVLIVQQGS (75 aa). Ser-4045 is subject to O-(pantetheine 4'-phosphoryl)serine. The interval 4100-4530 is condensation 4; it reads VPQSFAQGRL…GPDVPISTLP (431 aa). The adenylation 4 stretch occupies residues 4582-4986; sequence SYAQLDRESD…FLNDGFVEDV (405 aa). The tract at residues 5052 to 5241 is methyltransferase (M) domain 3; the sequence is TSMYDGTEID…ELLVDPAFFT (190 aa). Positions 5503-5577 constitute a Carrier 4 domain; that stretch reads PPRNSVEATV…DLAAVIQRNS (75 aa). The residue at position 5537 (Ser-5537) is an O-(pantetheine 4'-phosphoryl)serine. Positions 5592–6023 are condensation 5; sequence VPQSFAQGRL…QPLTPLAVLP (432 aa). An adenylation 5 region spans residues 6075-6478; that stretch reads TYAQLDQQSD…SHNSVQDAAV (404 aa). The tract at residues 6545–6729 is methyltransferase (M) domain 4; that stretch reads WTSMYDGSEI…ELEANEEELL (185 aa). In terms of domain architecture, Carrier 5 spans 7000 to 7074; that stretch reads APRNEIEAIL…DLAASIQRES (75 aa). The residue at position 7034 (Ser-7034) is an O-(pantetheine 4'-phosphoryl)serine. The tract at residues 7092–7517 is condensation 6; that stretch reads SFAQGRLWFL…VLDQPLTPIS (426 aa). Residues 7572–7976 form an adenylation 6 region; sequence TYAQLDEQSD…DHKSVLAATV (405 aa). The Carrier 6 domain maps to 8060 to 8134; sequence PPRDEVEAVL…DLADIIRRGS (75 aa). Ser-8094 is modified (O-(pantetheine 4'-phosphoryl)serine). The interval 8152–8582 is condensation 7; the sequence is SFAQGRLWFL…PKQRLMAMPI (431 aa). Residues 8633 to 9038 form an adenylation 7 region; the sequence is TYADLDGQSN…GHDLVHDAAV (406 aa). The interval 9111-9288 is methyltransferase (M) domain 5; the sequence is PVNEMKEWLD…EESEEELLVD (178 aa). Positions 9555–9629 constitute a Carrier 7 domain; the sequence is APRNDTEIVL…DLAASIEQGS (75 aa). Ser-9589 carries the O-(pantetheine 4'-phosphoryl)serine modification. The interval 9647–10077 is condensation 8; it reads SYAQGRLWFL…QVSISTMPLT (431 aa). The segment at 10127–10529 is adenylation 8; sequence SYTSLDQKSE…GNKAIHDAAV (403 aa). The segment at 10588 to 10768 is methyltransferase (M) domain 6; sequence RDFTSWTSMY…DQIRQEVARL (181 aa). In terms of domain architecture, Carrier 8 spans 11052–11126; sequence APRNDIEAVL…DLADVVQTGS (75 aa). Ser-11086 is modified (O-(pantetheine 4'-phosphoryl)serine). The condensation 9 stretch occupies residues 11144–11567; sequence SFSQGRLWFL…HANLATLPLT (424 aa). Positions 11616-12019 are adenylation 9; sequence TYTELDERSS…RDPAISDSAV (404 aa). In terms of domain architecture, Carrier 9 spans 12124-12198; the sequence is APRNDIETII…QLAASIQQGS (75 aa). The residue at position 12158 (Ser-12158) is an O-(pantetheine 4'-phosphoryl)serine. The interval 12216 to 12645 is condensation 10; sequence SFAQGRLWFL…IAISTMPLVD (430 aa). The adenylation 10 stretch occupies residues 12696 to 13096; sequence TYAELDQQSD…SDSSINDAVV (401 aa). Positions 13162–13343 are methyltransferase (M) domain 7; that stretch reads YDGSLIPREE…EDDEEELLVD (182 aa). One can recognise a Carrier 10 domain in the interval 13620–13694; the sequence is APRTEIEVVL…DLAASILQGS (75 aa). Position 13654 is an O-(pantetheine 4'-phosphoryl)serine (Ser-13654). The condensation 11 stretch occupies residues 13710 to 14143; sequence EQSFAQGRLW…PQSPIATMPL (434 aa). The segment at 14194-14598 is adenylation 11; the sequence is TYAELDRLSD…SENSVTDAAV (405 aa). Residues 14695-14769 form the Carrier 11 domain; the sequence is APRNETEAAI…SLAGKLEQQQ (75 aa). Residue Ser-14729 is modified to O-(pantetheine 4'-phosphoryl)serine. A condensation 12 region spans residues 14814-15158; sequence DMYPATQTQI…HPEAEIEGQQ (345 aa). The interval 15169–15224 is disordered; it reads QARQANGHAPNGTNGTNGTNGTNGANGTNGTNGTNGTHANGINGSNGVNGRDSNVV. The segment covering 15173 to 15211 has biased composition (low complexity); it reads ANGHAPNGTNGTNGTNGTNGANGTNGTNGTNGTHANGIN. Polar residues predominate over residues 15213–15224; sequence SNGVNGRDSNVV.

The protein belongs to the NRP synthetase family. Pantetheine 4'-phosphate serves as cofactor.

Functionally, nonribosomal peptide synthetase; part of the gene cluster that mediates the biosynthesis of the cycloundecapeptide cyclosporin A (CsA), a compound with antifungal activity used as an immunosuppressant drug. Cyclosporin A contains three non-proteinogenic amino acids: D-alanine, alpha-amino butyric acid and the unusual amino acid (4R)-4-[(E)-2-butenyl]-4-methyl-l-threonine (Bmt). The nonribosomal peptide synthetase (NRPS) catalyzes the elongation and cyclization of the undecapeptide chain. SimA contains 11 modules responsible for sequential uptake of substrates and chain elongation. In addition to the core condensation-adenylation-thiolation (C-A-T) domains present in each module, seven modules contain an additional N-methylation (M) domain (modules 2, 3, 4, 5, 7, 8, and 10). The terminal C domain (C12 or Ct) is implicated in cyclization of the peptidyl chains to form CsA. The first module (A1) takes up D-Ala which is provided by the alanine racemase simB. The A2, A3, A8, and A10 domains have the same substrate-specific signature for recognition of leucine residues. The unusual amino acid (4R)-4-[(E)-2-butenyl]-4-methyl-l-threonine (Bmt) is recognized by the fifth module (A5). The A11 domain recognizes L-Ala. The PKS simG mediates the biosynthesis of 3R-hydroxyl-4R-methyl-6E-octenoic acid from acetyl coenzyme A (acetyl-CoA), malonyl-CoA, and S-adenosylmethionine, and 3R-hydroxyl-4R-methyl-6E-octenoic acid is then be repeatedly oxidized by simI to 3R-hydroxy-4R-methyl-2-keto-6E-octenoic acid. The latter is likely converted to Bmt through the action of the aminotransferase SimJ. In Tolypocladium inflatum (Cyclosporin fungus), this protein is Cyclosporin synthetase simA.